A 221-amino-acid chain; its full sequence is Redox-sensing transcriptional repressor Rex (221 aa).

Positions 17–56 (IYYYYLSSLHEAGIKRINSTEISEAIKFDAATVRRDFSYF) form a DNA-binding region, H-T-H motif. An NAD(+)-binding site is contributed by 91–96 (GTGNLG).

Belongs to the transcriptional regulatory Rex family. Homodimer.

It is found in the cytoplasm. Functionally, modulates transcription in response to changes in cellular NADH/NAD(+) redox state. The protein is Redox-sensing transcriptional repressor Rex of Oenococcus oeni (strain ATCC BAA-331 / PSU-1).